A 236-amino-acid polypeptide reads, in one-letter code: Small ribosomal subunit protein uS3 (236 aa).

Positions 39-107 (VREFLKKKLA…PVHLNIEEVR (69 aa)) constitute a KH type-2 domain. Residues 215-236 (AAQPAEPEKKVRKSGAKNAATS) form a disordered region.

The protein belongs to the universal ribosomal protein uS3 family. In terms of assembly, part of the 30S ribosomal subunit. Forms a tight complex with proteins S10 and S14.

Binds the lower part of the 30S subunit head. Binds mRNA in the 70S ribosome, positioning it for translation. The sequence is that of Small ribosomal subunit protein uS3 from Methylobacillus flagellatus (strain ATCC 51484 / DSM 6875 / VKM B-1610 / KT).